We begin with the raw amino-acid sequence, 24 residues long: M-ectatotoxin-Eb2b (24 aa).

As to expression, expressed by the venom gland.

It is found in the secreted. Antimicrobial peptide active against Gram-negative bacterium E.coli MH1 (MIC=2.5 uM) and P.aeruginosa PAO1 (MIC=10 uM) and against Gram-positive bacterium A.globiformis VKM Ac-1112 (MIC=0.6 uM). The polypeptide is M-ectatotoxin-Eb2b (Ectatomma brunneum (Ant)).